Here is a 320-residue protein sequence, read N- to C-terminus: Epoxidase atD (320 aa).

Residues N245 and N299 are each glycosylated (N-linked (GlcNAc...) asparagine).

It functions in the pathway secondary metabolite biosynthesis. Epoxidase; part of the gene cluster that mediates the biosynthesis of terreic acid, a quinone epoxide inhibitor of Bruton's tyrosine kinase. The first step of the pathway is the synthesis of 6-methylsalicylic acid (6-MSA) by the 6-methylsalicylic acid synthase atX. In the biosynthesis of 6-MSA, atX utilizes one acetyl-CoA and three malonyl-CoAs as its substrates and catalyzes a series of programmed reactions including Claisen condensation, reduction, aldol cyclization, and the hydrolytic cleavage that yields 6-MSA. The 6-methylsalicylate 1-monooxygenase atA then catalyzes the decarboxylative hydroxylation of 6-MSA to 3-methylcatechol. The next step is the conversion of 3-methylcatechol to 3-methyl-1,2,4-benzenetriol by cytochrome P450 monooxygenase atE, which is enhanced by cytochrome P450 monooxygenase atG. Then, the epoxidase atD catalyzes the epoxidation and hydroxyl oxidation of 3-methyl-1,2,4-benzenetriol to terremutin. Lastly, GMC oxidoreductase atC oxidizes terremutin to terreic acid. The sequence is that of Epoxidase atD from Aspergillus terreus (strain NIH 2624 / FGSC A1156).